The primary structure comprises 669 residues: Dynamin-related protein 4C (669 aa).

The segment at 1-21 (MVKKKVATKKNSPSLAIAKKK) is disordered. A Dynamin-type G domain is found at 62 to 323 (GIHLPTIVVV…QSSMIARCLP (262 aa)). The segment at 72–79 (GDQSSGKS) is G1 motif. A GTP-binding site is contributed by 72-79 (GDQSSGKS). A G2 motif region spans residues 97–99 (CTR). Positions 171–174 (DLPG) are G3 motif. GTP-binding positions include 171 to 175 (DLPGI) and 240 to 243 (TKAD). Residues 240–243 (TKAD) form a G4 motif region. Glu273 is a region of interest (G5 motif). The region spanning 575–669 (AFDMKMRITS…AVAAIVDQNC (95 aa)) is the GED domain.

This sequence belongs to the TRAFAC class dynamin-like GTPase superfamily. Dynamin/Fzo/YdjA family.

It localises to the cytoplasm. The protein resides in the cytoskeleton. Its function is as follows. Putative microtubule-associated force-producing protein, able to bind and hydrolyze GTP. The protein is Dynamin-related protein 4C (DRP4C) of Arabidopsis thaliana (Mouse-ear cress).